Reading from the N-terminus, the 1034-residue chain is MGKAENYELYQVELGPGPSGDMAAKMSKKKAGRGGGKRKEKLENMKKEMEINDHQLSVAELEQKYQTSATKGLSASLAAELLLRDGPNALRPPRGTPEYVKFARQLAGGLQCLMWVAAAICLIAFAIQASEGDLTTDDNLYLALALIAVVVVTGCFGYYQEFKSTNIIASFKNLVPQQATVIRDGDKFQINADQLVVGDLVEMKGGDRVPADIRILQAQGRKVDNSSLTGESEPQTRSPECTHESPLETRNIAFFSTMCLEGTAQGLVVNTGDRTIIGRIASLASGVENEKTPIAIEIEHFVDIIAGLAILFGATFFIVAMCIGYTFLRAMVFFMAIVVAYVPEGLLATVTVCLSLTAKRLASKNCVVKNLEAVETLGSTSVICSDKTGTLTQNRMTVSHLWFDNHIHSADTTEDQSGQTFDQSSETWRALCRVLTLCNRAAFKSGQDAVPVPKRIVIGDASETALLKFSELTLGNAMGYRERFPKVCEIPFNSTNKFQLSIHTLEDPRDPRHVLVMKGAPERVLERCSSILIKGQELPLDEQWREAFQTAYLSLGGLGERVLGFCQLYLSEKDYPPGYAFDVEAMNFPTSGLSFAGLVSMIDPPRATVPDAVLKCRTAGIRVIMVTGDHPITAKAIAASVGIISEGSETVEDIAARLRVPVDQVNRKDARACVINGMQLKDMDPSELVEALRTHPEMVFARTSPQQKLVIVESCQRLGAIVAVTGDGVNDSPALKKADIGVAMGIAGSDAAKNAADMILLDDNFASIVTGVEQGRLIFDNLKKSIAYTLTKNIPELTPYLIYITVSVPLPLGCITILFIELCTDIFPSVSLAYEKAESDIMHLRPRNPKRDRLVNEPLAAYSYFQIGAIQSFAGFTDYFTAMAQEGWFPLLCVGLRPQWENHHLQDLQDSYGQEWTFGQRLYQQYTCYTVFFISIEMCQIADVLIRKTRRLSAFQQGFFRNRILVIAIVFQVCIGCFLCYCPGMPNIFNFMPIRFQWWLVPMPFGLLIFVYDEIRKLGVRCCPGSWWDQELYY.

Topologically, residues 2 to 97 (GKAENYELYQ…NALRPPRGTP (96 aa)) are cytoplasmic. Residues tyrosine 7 and tyrosine 10 each carry the phosphotyrosine modification. Positions 13–40 (ELGPGPSGDMAAKMSKKKAGRGGGKRKE) are disordered. A compositionally biased stretch (basic residues) spans 26-39 (MSKKKAGRGGGKRK). Serine 27 carries the phosphoserine; by PKA and PKC modification. Residues 98-118 (EYVKFARQLAGGLQCLMWVAA) traverse the membrane as a helical segment. Residues 119–141 (AICLIAFAIQASEGDLTTDDNLY) are Lumenal-facing. Residues 142–162 (LALALIAVVVVTGCFGYYQEF) traverse the membrane as a helical segment. Residues 163-298 (KSTNIIASFK…NEKTPIAIEI (136 aa)) lie on the Cytoplasmic side of the membrane. The segment at 222–244 (KVDNSSLTGESEPQTRSPECTHE) is disordered. A compositionally biased stretch (polar residues) spans 225 to 239 (NSSLTGESEPQTRSP). The helical transmembrane segment at 299–318 (EHFVDIIAGLAILFGATFFI) threads the bilayer. Residues 319–330 (VAMCIGYTFLRA) are Lumenal-facing. Residues 331 to 348 (MVFFMAIVVAYVPEGLLA) form a helical membrane-spanning segment. Positions 339, 340, 342, and 344 each coordinate K(+). Residues 349-782 (TVTVCLSLTA…EQGRLIFDNL (434 aa)) are Cytoplasmic-facing. Aspartate 386 functions as the 4-aspartylphosphate intermediate in the catalytic mechanism. Aspartate 386 and threonine 388 together coordinate Mg(2+). Phosphoserine is present on residues serine 462 and serine 600. 2 residues coordinate Mg(2+): aspartate 727 and aspartate 731. Residues 783 to 802 (KKSIAYTLTKNIPELTPYLI) traverse the membrane as a helical segment. Glutamate 796 lines the K(+) pocket. Residues 803 to 812 (YITVSVPLPL) lie on the Lumenal side of the membrane. Residues 813–833 (GCITILFIELCTDIFPSVSLA) traverse the membrane as a helical segment. A K(+)-binding site is contributed by glutamate 821. Topologically, residues 834 to 853 (YEKAESDIMHLRPRNPKRDR) are cytoplasmic. Serine 839 carries the post-translational modification Phosphoserine. A helical transmembrane segment spans residues 854–876 (LVNEPLAAYSYFQIGAIQSFAGF). Over 877-928 (TDYFTAMAQEGWFPLLCVGLRPQWENHHLQDLQDSYGQEWTFGQRLYQQYTC) the chain is Lumenal. A helical membrane pass occupies residues 929 to 948 (YTVFFISIEMCQIADVLIRK). Residues 949–962 (TRRLSAFQQGFFRN) are Cytoplasmic-facing. Serine 953 is modified (phosphoserine; by PKA). The chain crosses the membrane as a helical span at residues 963-981 (RILVIAIVFQVCIGCFLCY). Over 982–996 (CPGMPNIFNFMPIRF) the chain is Lumenal. The chain crosses the membrane as a helical span at residues 997-1017 (QWWLVPMPFGLLIFVYDEIRK). The Cytoplasmic segment spans residues 1018-1034 (LGVRCCPGSWWDQELYY).

Belongs to the cation transport ATPase (P-type) (TC 3.A.3) family. Type IIC subfamily. In terms of assembly, the gastric H(+)/K(+) ATPase pump is composed of the catalytic alpha subunit ATP4A and the regulatory beta subunit ATP4B. Interacts (via the P-domain) with ATP4B (via N-terminus); this interaction stabilizes the lumenal-open E2 conformation state and prevents the reverse reaction of the transport cycle.

The protein localises to the apical cell membrane. It is found in the cell membrane. The catalysed reaction is K(+)(out) + ATP + H2O + H(+)(in) = K(+)(in) + ADP + phosphate + 2 H(+)(out). Its activity is regulated as follows. Down-regulated by K(+)-competitive acid blockers (P-CABs) such as vonoprazan. Functionally, the catalytic subunit of the gastric H(+)/K(+) ATPase pump which transports H(+) ions in exchange for K(+) ions across the apical membrane of parietal cells. Uses ATP as an energy source to pump H(+) ions to the gastric lumen while transporting K(+) ion from the lumen into the cell. Remarkably generates a million-fold proton gradient across the gastric parietal cell membrane, acidifying the gastric juice down to pH 1. Within a transport cycle, the transfer of a H(+) ion across the membrane is coupled to ATP hydrolysis and is associated with a transient phosphorylation that shifts the pump conformation from inward-facing (E1) to outward-facing state (E2). The release of the H(+) ion in the stomach lumen is followed by binding of K(+) ion converting the pump conformation back to the E1 state. The sequence is that of Potassium-transporting ATPase alpha chain 1 (ATP4A) from Sus scrofa (Pig).